Reading from the N-terminus, the 286-residue chain is Flagellin FlaB1 (286 aa).

The segment at 231-286 (LDIAAENLQAAESRIRDANIAKQMVEYTKNQVLTQSGTAMLAQANTSAQSILSILR) is required for interaction with FliW.

Belongs to the bacterial flagellin family. As to quaternary structure, the flagellum consists of an outer layer composed of repeating units of FlaA around a core that contains several antigenically related polypeptides. Interacts via its C-terminus with FliW; a synthetic peptide of residues 229-247 partially blocks binding to FliW.

It localises to the periplasmic flagellum. The protein resides in the periplasm. In terms of biological role, component of the core of the flagella. This is Flagellin FlaB1 (flaB1) from Treponema pallidum (strain Nichols).